The following is a 648-amino-acid chain: p-hydroxybenzoic acid efflux pump subunit AaeB (648 aa).

Helical transmembrane passes span 11-31, 41-61, 65-87, 91-110, 125-145, 150-170, 369-389, 406-426, 430-450, 458-478, and 481-501; these read FACK…YFGL, AALV…SGAI, GWLR…MLLI, LLMI…LSSL, TALI…QLAL, EIVL…PRSV, LFWL…IAVV, FLMG…LILP, QSLV…GMAV, MGTL…GFPI, and FVDS…VLLV.

It belongs to the aromatic acid exporter ArAE (TC 2.A.85) family.

It localises to the cell inner membrane. Functionally, forms an efflux pump with AaeA. Could function as a metabolic relief valve, allowing to eliminate certain compounds when they accumulate to high levels in the cell. This chain is p-hydroxybenzoic acid efflux pump subunit AaeB, found in Edwardsiella ictaluri (strain 93-146).